Reading from the N-terminus, the 973-residue chain is Valine--tRNA ligase (973 aa).

The short motif at 57–67 (PNVTGSLHMGH) is the 'HIGH' region element. The short motif at 569 to 573 (KMSKS) is the 'KMSKS' region element. Lysine 572 is a binding site for ATP. The stretch at 901-970 (MAGLIDKEAE…AKILEQKIQI (70 aa)) forms a coiled coil.

The protein belongs to the class-I aminoacyl-tRNA synthetase family. ValS type 1 subfamily. Monomer.

The protein resides in the cytoplasm. It catalyses the reaction tRNA(Val) + L-valine + ATP = L-valyl-tRNA(Val) + AMP + diphosphate. In terms of biological role, catalyzes the attachment of valine to tRNA(Val). As ValRS can inadvertently accommodate and process structurally similar amino acids such as threonine, to avoid such errors, it has a 'posttransfer' editing activity that hydrolyzes mischarged Thr-tRNA(Val) in a tRNA-dependent manner. The sequence is that of Valine--tRNA ligase from Colwellia psychrerythraea (strain 34H / ATCC BAA-681) (Vibrio psychroerythus).